We begin with the raw amino-acid sequence, 129 residues long: uncharacterized protein (129 aa).

The tract at residues 52-94 (NGDEESQDDWLNDLLKSDGDGGKAGPVDPSHPMETTTTDHSSQ) is disordered. Residues 53 to 62 (GDEESQDDWL) are compositionally biased toward acidic residues. Residues 84–94 (METTTTDHSSQ) are compositionally biased toward polar residues.

This is an uncharacterized protein from Caenorhabditis elegans.